Reading from the N-terminus, the 537-residue chain is Lysine--tRNA ligase (537 aa).

Residues 30–38 carry the 'HIGH' region motif; it reads PSGNIHIGN. Positions 276–280 match the 'KMSKS' region motif; it reads AMSSS.

The protein belongs to the class-I aminoacyl-tRNA synthetase family.

The protein localises to the cytoplasm. The enzyme catalyses tRNA(Lys) + L-lysine + ATP = L-lysyl-tRNA(Lys) + AMP + diphosphate. The sequence is that of Lysine--tRNA ligase from Methanosarcina barkeri.